The sequence spans 107 residues: uncharacterized protein (107 aa).

The next 2 membrane-spanning stretches (helical) occupy residues 11-31 and 58-78; these read CVNF…ILCI and LFFL…LAFQ.

It localises to the mitochondrion membrane. This is an uncharacterized protein from Saccharomyces cerevisiae (strain ATCC 204508 / S288c) (Baker's yeast).